The chain runs to 602 residues: MKPYKIENIRNFSIIAHIDHGKSTIADRLLESTSTIEQREMREQLLDSMDLERERGITIKAHPVTMTYEYEGETYELNLIDTPGHVDFSYEVSRSLAACEGALLIVDAAQGVQAQSLANVYLALERDLEIIPVLNKIDLPAAQPEAIKKQIEEFIGLDTSNTIACSAKTGQGIPEILESIIRLVPPPKPPQETELKALIFDSHYDPYVGIMVYVRVISGEIKKGDRITFMATKGSSFEVLGIGAFLPEATLMEGSLRAGQVGYFIANLKKVKDVKIGDTVTTVKHPAKEPLEGFKEIKPVVFAGIYPIDSSDFDTLKDALGRLQLNDSALTIEQESSHSLGFGFRCGFLGLLHLEIIFERISREFDLDIIATAPSVIYKVVLKNGKTLFIDNPTAYPDPALIEHMEEPWVHVNIITPQEYLSNIMSLCMDKRGICLKTDMLDQHRLVLSYELPLNEIVSDFNDKLKSVTKGYGSFDYRLGDYKKGAIIKLEILINDEAVDAFSCLVHRDKAESKGRSICEKLVDVIPPQLFKIPIQAAINKKIIARETIRALAKNVTAKCYGGDITRKRKLWDKQKKGKKRMKEFGKVSIPNTAFVEVLKME.

A tr-type G domain is found at Glu-7–Lys-188. Residues Asp-19–Thr-24 and Asn-135–Asp-138 each bind GTP.

It belongs to the TRAFAC class translation factor GTPase superfamily. Classic translation factor GTPase family. LepA subfamily.

The protein resides in the cell inner membrane. The enzyme catalyses GTP + H2O = GDP + phosphate + H(+). Its function is as follows. Required for accurate and efficient protein synthesis under certain stress conditions. May act as a fidelity factor of the translation reaction, by catalyzing a one-codon backward translocation of tRNAs on improperly translocated ribosomes. Back-translocation proceeds from a post-translocation (POST) complex to a pre-translocation (PRE) complex, thus giving elongation factor G a second chance to translocate the tRNAs correctly. Binds to ribosomes in a GTP-dependent manner. The chain is Elongation factor 4 from Chlamydia trachomatis serovar L2 (strain ATCC VR-902B / DSM 19102 / 434/Bu).